A 161-amino-acid chain; its full sequence is V-type proton ATPase subunit c (161 aa).

Topologically, residues 1 to 9 are lumenal; sequence MSTDLCPVY. The chain crosses the membrane as a helical span at residues 10 to 32; sequence APFFGVMGCTAAIVFASFGAAYG. Over 33–54 the chain is Cytoplasmic; sequence TAKAGVGISAMGVLRPDLIVKN. A helical transmembrane segment spans residues 55-75; that stretch reads TIPVVMAGIIAIYGLVVSVLI. Over 76-91 the chain is Lumenal; sequence SGNLKQILSLYSGFIQ. A helical membrane pass occupies residues 92–113; it reads LGAGLSVGLAGLAAGFAIGIVG. Residues 114–125 are Cytoplasmic-facing; that stretch reads DAGVRGTAQQPR. The helical transmembrane segment at 126-151 threads the bilayer; the sequence is LFVAMILILIFAEVLGLYGLIVALLL. Over 152-161 the chain is Lumenal; it reads NTRATDNVTC.

It belongs to the V-ATPase proteolipid subunit family. As to quaternary structure, V-ATPase is a heteromultimeric enzyme composed of a peripheral catalytic V1 complex (components A to H) attached to an integral membrane V0 proton pore complex (components: a, c, c', c'', d, e, f and VOA1). The decameric c-ring forms the proton-conducting pore, and is composed of eight proteolipid subunits c, one subunit c' and one subunit c''.

The protein localises to the vacuole membrane. Proton-conducting pore forming subunit of the V0 complex of vacuolar(H+)-ATPase (V-ATPase), a multisubunit enzyme composed of a peripheral complex (V1) that hydrolyzes ATP and a membrane integral complex (V0) that translocates protons. V-ATPase is responsible for acidifying and maintaining the pH of intracellular compartments. This is V-type proton ATPase subunit c from Schizosaccharomyces pombe (strain 972 / ATCC 24843) (Fission yeast).